The following is an 882-amino-acid chain: Alanine--tRNA ligase (882 aa).

Zn(2+)-binding residues include His570, His574, Cys672, and His676.

The protein belongs to the class-II aminoacyl-tRNA synthetase family. Zn(2+) is required as a cofactor.

The protein resides in the cytoplasm. The enzyme catalyses tRNA(Ala) + L-alanine + ATP = L-alanyl-tRNA(Ala) + AMP + diphosphate. In terms of biological role, catalyzes the attachment of alanine to tRNA(Ala) in a two-step reaction: alanine is first activated by ATP to form Ala-AMP and then transferred to the acceptor end of tRNA(Ala). Also edits incorrectly charged Ser-tRNA(Ala) and Gly-tRNA(Ala) via its editing domain. The protein is Alanine--tRNA ligase of Xanthomonas axonopodis pv. citri (strain 306).